A 466-amino-acid polypeptide reads, in one-letter code: ATP synthase subunit beta (466 aa).

Residue 153-160 participates in ATP binding; that stretch reads GGAGVGKT.

Belongs to the ATPase alpha/beta chains family. F-type ATPases have 2 components, CF(1) - the catalytic core - and CF(0) - the membrane proton channel. CF(1) has five subunits: alpha(3), beta(3), gamma(1), delta(1), epsilon(1). CF(0) has three main subunits: a(1), b(2) and c(9-12). The alpha and beta chains form an alternating ring which encloses part of the gamma chain. CF(1) is attached to CF(0) by a central stalk formed by the gamma and epsilon chains, while a peripheral stalk is formed by the delta and b chains.

Its subcellular location is the cell membrane. It carries out the reaction ATP + H2O + 4 H(+)(in) = ADP + phosphate + 5 H(+)(out). In terms of biological role, produces ATP from ADP in the presence of a proton gradient across the membrane. The catalytic sites are hosted primarily by the beta subunits. The polypeptide is ATP synthase subunit beta (Clostridium acetobutylicum (strain ATCC 824 / DSM 792 / JCM 1419 / IAM 19013 / LMG 5710 / NBRC 13948 / NRRL B-527 / VKM B-1787 / 2291 / W)).